An 830-amino-acid polypeptide reads, in one-letter code: Beta-glucosidase A (830 aa).

Residue Asp-769 is part of the active site.

It belongs to the glycosyl hydrolase 3 family.

It carries out the reaction Hydrolysis of terminal, non-reducing beta-D-glucosyl residues with release of beta-D-glucose.. Functionally, b.fibrisolvens beta-glucosidase hydrolyzes cellobiose to a limited extent, cellotriose to cellobiose and glucose, and cellotetraose and cellopentaose to predominantly glucose. The sequence is that of Beta-glucosidase A (bglA) from Butyrivibrio fibrisolvens.